Reading from the N-terminus, the 315-residue chain is Glycine--tRNA ligase alpha subunit (315 aa).

Belongs to the class-II aminoacyl-tRNA synthetase family. In terms of assembly, tetramer of two alpha and two beta subunits.

The protein localises to the cytoplasm. It catalyses the reaction tRNA(Gly) + glycine + ATP = glycyl-tRNA(Gly) + AMP + diphosphate. The chain is Glycine--tRNA ligase alpha subunit from Pseudomonas aeruginosa (strain LESB58).